A 670-amino-acid polypeptide reads, in one-letter code: WD repeat-containing protein 48 homolog (670 aa).

WD repeat units follow at residues 13–52 (RHRN…SQEP), 59–98 (HHND…CMST), 101–140 (THRD…ALTA), 152–191 (GSKD…KIAK), 194–233 (GHTE…CIQT), 236–275 (VHSE…NSVL), and 278–317 (EERA…KLSN). Residues 321 to 348 (SSNSSINSGGGGDGTPVTNSASNATPAS) are disordered. Low complexity predominate over residues 338–348 (TNSASNATPAS). Residues 359 to 398 (KGGAAIKKYHVLNDKRFMLTKDSEQNVAIYDVLKVKKVED) form a WD 8 repeat. Positions 613-625 (GGGGGSSTGGGGN) are enriched in gly residues. The tract at residues 613-645 (GGGGGSSTGGGGNSNSSQNNSQSDANSEGSQVP) is disordered. Positions 626–635 (SNSSQNNSQS) are enriched in low complexity.

The protein belongs to the WD repeat WDR48 family. Catalytic component of the Usp12-46 deubiquitylase complex consisting of Usp12-46, Wdr20 and Uaf1; regulatory subunit that, together wtih Wdr20, stabilizes Usp12-46. The Usp12-46 deubiquitylase complex associates with arr/arrow; the interaction leads to deubiquitination and stabilization of arr/arrow.

Its function is as follows. Regulatory component of the Usp12-46 deubiquitylase complex. activates deubiquitination by increasing the catalytic turnover without increasing the affinity of deubiquitinating enzymes for the substrate. The complex deubiquitylates the wg/wingless-signaling receptor arr/arrow, which stabilizes the receptor and increases its concentration at the cell surface; this enhances the sensitivity of cells to wg/wingless-signal stimulation. This increases the amplitude and spatial range of the signaling response to the wg/wingless morphogen gradient, facilitating the precise concentration-dependent regulation of its target genes. Together with Wdr20 and Usp12-46 required for wg/wingless-mediated signaling in the wing imaginal disc and for wg/wingless-dependent regulation of intestinal stem cell proliferation. This is WD repeat-containing protein 48 homolog from Culex quinquefasciatus (Southern house mosquito).